Consider the following 133-residue polypeptide: Small ribosomal subunit protein uS8 (133 aa).

This sequence belongs to the universal ribosomal protein uS8 family. Part of the 30S ribosomal subunit. Contacts proteins S5 and S12.

One of the primary rRNA binding proteins, it binds directly to 16S rRNA central domain where it helps coordinate assembly of the platform of the 30S subunit. The chain is Small ribosomal subunit protein uS8 from Chlamydia pneumoniae (Chlamydophila pneumoniae).